Reading from the N-terminus, the 24-residue chain is Humanin-like 1 (24 aa).

It belongs to the humanin family. Highly expressed in the kidney, heart muscle and testis.

It localises to the secreted. It is found in the cytoplasm. In terms of biological role, plays a role as a neuroprotective and antiapoptotic factor. The protein is Humanin-like 1 of Homo sapiens (Human).